A 402-amino-acid polypeptide reads, in one-letter code: MPKNTPIIRSLLDTDLYKFTMLQVVLHQFPAAHGEYEFRCRNHPDTPLTQLKQQLETQLDLLCELRFSQDELDYLRGLRFIKSDYVDYLELFHLQRRFISVSEEGEQLAIRIKGPMVQAMFFEIFVLAIVNELYFRPLDSKAVREEGRRRLEAKLAELERFQREEAPGQRFPLLIADFGTRRRFSRDWQAHVVERLNHALPQVFRGTSNVYLARKLGITPIGTMAHEFFQAFQALGVRLRDFQKAALESWVQEYRGDLGIALTDVVGMDAFLADFDLYFAKLFDGLRHDSGDPYIWGEKAIAHYRKLRIDPATKMLTFSDGLSVDSALQLQRHFSPHIQVSFGIGTHFTNDMGLEPLQIVLKLVSCNGQPVAKLSDSPGKTMCSDETFLAYLRQVFKVPALA.

Position 226 is a phosphohistidine; by autocatalysis (His-226).

The protein belongs to the NAPRTase family. In terms of processing, transiently phosphorylated on a His residue during the reaction cycle. Phosphorylation strongly increases the affinity for substrates and increases the rate of nicotinate D-ribonucleotide production. Dephosphorylation regenerates the low-affinity form of the enzyme, leading to product release.

It catalyses the reaction nicotinate + 5-phospho-alpha-D-ribose 1-diphosphate + ATP + H2O = nicotinate beta-D-ribonucleotide + ADP + phosphate + diphosphate. Its pathway is cofactor biosynthesis; NAD(+) biosynthesis; nicotinate D-ribonucleotide from nicotinate: step 1/1. Its function is as follows. Catalyzes the synthesis of beta-nicotinate D-ribonucleotide from nicotinate and 5-phospho-D-ribose 1-phosphate at the expense of ATP. In Chromobacterium violaceum (strain ATCC 12472 / DSM 30191 / JCM 1249 / CCUG 213 / NBRC 12614 / NCIMB 9131 / NCTC 9757 / MK), this protein is Nicotinate phosphoribosyltransferase.